Here is a 190-residue protein sequence, read N- to C-terminus: Glutamyl-tRNA(Gln) amidotransferase subunit C, mitochondrial (190 aa).

The N-terminal 96 residues, 1–96 (MISFQIILQQ…VLNLKQAVRF (96 aa)), are a transit peptide targeting the mitochondrion. The interval 28 to 57 (KSNSTAVGSSDEDDEIYVPKKPIPSPIDQS) is disordered.

This sequence belongs to the GatC family. As to quaternary structure, subunit of the heterotrimeric GatCAB amidotransferase (AdT) complex, composed of A, B and C subunits.

The protein localises to the mitochondrion. The enzyme catalyses L-glutamyl-tRNA(Gln) + L-glutamine + ATP + H2O = L-glutaminyl-tRNA(Gln) + L-glutamate + ADP + phosphate + H(+). Allows the formation of correctly charged Gln-tRNA(Gln) through the transamidation of misacylated Glu-tRNA(Gln) in the mitochondria. The reaction takes place in the presence of glutamine and ATP through an activated gamma-phospho-Glu-tRNA(Gln). This chain is Glutamyl-tRNA(Gln) amidotransferase subunit C, mitochondrial, found in Loa loa (Eye worm).